The chain runs to 129 residues: MRHRKSGRQLNRNSSHRQAMFRNMASALVSHEIIKTTLPKAKELRRVVEPLITLAKEDSVANRRLAFARTRNVETVAKLFNELGPRFAQRAGGYTRILKCGFRAGDNAPMAYIELVDRPEVSTETATTE.

It belongs to the bacterial ribosomal protein bL17 family. Part of the 50S ribosomal subunit. Contacts protein L32.

The sequence is that of Large ribosomal subunit protein bL17 from Actinobacillus succinogenes (strain ATCC 55618 / DSM 22257 / CCUG 43843 / 130Z).